The primary structure comprises 429 residues: D-inositol 3-phosphate glycosyltransferase (429 aa).

His-20 lines the 1D-myo-inositol 3-phosphate pocket. UDP-N-acetyl-alpha-D-glucosamine-binding positions include Gln-26–Pro-27 and Gly-34. 1D-myo-inositol 3-phosphate is bound by residues Asp-31–Asn-36, Lys-89, Tyr-122, Thr-146, and Arg-166. The UDP-N-acetyl-alpha-D-glucosamine site is built by Arg-240, Lys-245, and Gln-306. Residues Tyr-315, Arg-316, and Ala-318 each contribute to the Mg(2+) site. 2 residues coordinate UDP-N-acetyl-alpha-D-glucosamine: Glu-328 and Glu-336. Residue Thr-342 coordinates Mg(2+).

It belongs to the glycosyltransferase group 1 family. MshA subfamily. As to quaternary structure, homodimer.

It carries out the reaction 1D-myo-inositol 3-phosphate + UDP-N-acetyl-alpha-D-glucosamine = 1D-myo-inositol 2-acetamido-2-deoxy-alpha-D-glucopyranoside 3-phosphate + UDP + H(+). Catalyzes the transfer of a N-acetyl-glucosamine moiety to 1D-myo-inositol 3-phosphate to produce 1D-myo-inositol 2-acetamido-2-deoxy-glucopyranoside 3-phosphate in the mycothiol biosynthesis pathway. The chain is D-inositol 3-phosphate glycosyltransferase from Nocardiopsis dassonvillei (strain ATCC 23218 / DSM 43111 / CIP 107115 / JCM 7437 / KCTC 9190 / NBRC 14626 / NCTC 10488 / NRRL B-5397 / IMRU 509) (Actinomadura dassonvillei).